The following is a 130-amino-acid chain: Small ribosomal subunit protein uS8 (130 aa).

It belongs to the universal ribosomal protein uS8 family. As to quaternary structure, part of the 30S ribosomal subunit.

Functionally, one of the primary rRNA binding proteins, it binds directly to 16S rRNA central domain where it helps coordinate assembly of the platform of the 30S subunit. This Halobacterium salinarum (strain ATCC 29341 / DSM 671 / R1) protein is Small ribosomal subunit protein uS8.